We begin with the raw amino-acid sequence, 1923 residues long: Callose synthase 5 (1923 aa).

A compositionally biased stretch (polar residues) spans Met-1 to Ser-10. A disordered region spans residues Met-1–Ser-22. The Cytoplasmic segment spans residues Met-1–His-481. A helical transmembrane segment spans residues Ser-482 to Phe-502. Topologically, residues Glu-503 to Ser-521 are extracellular. The chain crosses the membrane as a helical span at residues Ile-522–Phe-542. Topologically, residues Pro-543–Lys-559 are cytoplasmic. A helical membrane pass occupies residues Ile-560–Phe-580. Topologically, residues Ala-581–Leu-601 are extracellular. The helical transmembrane segment at Tyr-602–Phe-622 threads the bilayer. The Cytoplasmic portion of the chain corresponds to Pro-623–Gln-658. The chain crosses the membrane as a helical span at residues Ile-659–Ser-679. The Extracellular portion of the chain corresponds to Tyr-680–Val-719. The chain crosses the membrane as a helical span at residues Ser-720–Phe-740. Residues Ser-741 to Tyr-1486 lie on the Cytoplasmic side of the membrane. The helical transmembrane segment at Phe-1487–Leu-1507 threads the bilayer. Residues Tyr-1508–Lys-1535 lie on the Extracellular side of the membrane. Residues Ala-1536–Met-1556 traverse the membrane as a helical segment. Residues Glu-1557–Thr-1566 lie on the Cytoplasmic side of the membrane. A helical membrane pass occupies residues Ala-1567 to Leu-1587. The Extracellular portion of the chain corresponds to Gly-1588–His-1630. A helical transmembrane segment spans residues Phe-1631–Ala-1651. Topologically, residues Glu-1652–Tyr-1657 are cytoplasmic. Residues Ala-1658–Phe-1678 traverse the membrane as a helical segment. Topologically, residues Asn-1679–Lys-1732 are extracellular. N-linked (GlcNAc...) asparagine glycosylation is present at Asn-1710. The helical transmembrane segment at Phe-1733–Leu-1755 threads the bilayer. Topologically, residues Thr-1756 to Ser-1766 are cytoplasmic. The helical transmembrane segment at Ile-1767–Val-1787 threads the bilayer. The Extracellular portion of the chain corresponds to Ser-1788–Arg-1803. Residues Leu-1804–Leu-1824 form a helical membrane-spanning segment. Position 1825 (Lys-1825) is a topological domain, cytoplasmic. A helical transmembrane segment spans residues Leu-1826–Leu-1846. The Extracellular segment spans residues Gln-1847 to Glu-1873. A helical membrane pass occupies residues Tyr-1874–Ser-1894. Residues Glu-1895–Lys-1923 lie on the Cytoplasmic side of the membrane.

The protein belongs to the glycosyltransferase 48 family.

The protein localises to the cell membrane. It catalyses the reaction [(1-&gt;3)-beta-D-glucosyl](n) + UDP-alpha-D-glucose = [(1-&gt;3)-beta-D-glucosyl](n+1) + UDP + H(+). Required for the formation of the callose wall separating the tetraspores (interstitial wall) and surrounding the pollen mother cells (peripheral wall). Required for exine formation on pollen wall. May be involved in callose synthesis during pollen tube growth. During plant growth and development, callose is found as a transitory component of the cell plate in dividing cells, is a major component of pollen mother cell walls and pollen tubes, and is found as a structural component of plasmodesmatal canals. The protein is Callose synthase 5 (CALS5) of Arabidopsis thaliana (Mouse-ear cress).